The primary structure comprises 800 residues: MSEIIQDLSLEDVLGDRFGRYSKYIIQERALPDVRDGLKPVQRRILYAMYSSGNTHDKNFRKSAKTVGDVIGQYHPHGDSSVYEAMVRLSQDWKLRHVLIEMHGNNGSIDNDPPAAMRYTEAKLSLLAEELLRDINKETVSFIPNYDDTTLEPMVLPSRFPNLLVNGSTGISAGYATDIPPHNLAEVIQATLKYIDNPDITVNQLMKYIKGPDFPTGGIIQGIDGIKKAYESGKGRIIVRSKVEEETLRNGRKQLIITEIPYEVNKSSLVKRIDELRADKKVDGIVEVRDETDRTGLRIAIELKKDVNSESIKNYLYKNSDLQISYNFNMVAISDGRPKLMGIRQIIDSYLNHQIEVVANRTKFELDNAEKRMHIVEGLIKALSILDKVIELIRSSKNKRDAKENLIEVYEFTEEQAEAIVMLQLYRLTNTDIVALEGEHKELEALIKQLRHILDNHDALLNVIKEELNEIKKKFKSERLSLIEAEIEEIKIDKEVMVPSEEVILSMTRHGYIKRTSIRSFNASGVEDIGLKDGDSLLKHQEVNTQDTVLVFTNKGRYLFIPVHKLADIRWKELGQHVSQIVPIEEDEVVINVFNEKDFNTDAFYVFATQNGMIKKSTVPLFKTTRFNKPLIATKVKENDDLISVMRFEKDQLITVITNKGMSLTYNTSELSDTGLRAAGVKSINLKAEDFVVVTEGVSENDTILMATQRGSLKRISFKILQVAKRAQRGITLLKELKKNPHRIVAAHVVTGEHSQYTLYSKSNEEHGLINDIHKSEQYTNGSFIVDTDDFGEVIDMYIS.

The region spanning 31 to 495 (LPDVRDGLKP…EIEEIKIDKE (465 aa)) is the Topo IIA-type catalytic domain. The O-(5'-phospho-DNA)-tyrosine intermediate role is filled by Tyr-119.

Belongs to the type II topoisomerase GyrA/ParC subunit family. ParC type 2 subfamily. Heterotetramer composed of ParC and ParE.

The protein localises to the cell membrane. It catalyses the reaction ATP-dependent breakage, passage and rejoining of double-stranded DNA.. Its function is as follows. Topoisomerase IV is essential for chromosome segregation. It relaxes supercoiled DNA. Performs the decatenation events required during the replication of a circular DNA molecule. The polypeptide is DNA topoisomerase 4 subunit A (Staphylococcus aureus (strain MSSA476)).